A 349-amino-acid polypeptide reads, in one-letter code: Leukotriene B4 receptor 1 (349 aa).

Residues 1 to 19 (MNTTSPAAPSSSGVSFISL) are Extracellular-facing. An N-linked (GlcNAc...) asparagine glycan is attached at asparagine 2. The chain crosses the membrane as a helical span at residues 20–42 (LVIIVLSVALAVGLPGNSFVVWS). Residues 43–54 (ILAKLRKRSVTA) are Cytoplasmic-facing. A helical transmembrane segment spans residues 55–75 (LMVLHLALADLAVLLTAPFFL). Over 76–91 (YSVAQGTWTFGLSSCR) the chain is Extracellular. The chain crosses the membrane as a helical span at residues 92 to 113 (LFHYVCGVSMYASVLLIMTMSL). Topologically, residues 114–138 (DRSLAVALPFVSQKLRTKAVAWRVL) are cytoplasmic. A helical transmembrane segment spans residues 139-159 (AGIWVMSVLLATPVLLYRTVH). The Extracellular segment spans residues 160-179 (LGLNNRSLTCFLKYPSERHR). The N-linked (GlcNAc...) asparagine glycan is linked to asparagine 164. A helical transmembrane segment spans residues 180–200 (AFHLFFEVITGFLLPFLVVVA). The Cytoplasmic segment spans residues 201–222 (SYCDIGRRLRARRFRRSRRTGR). Residues 223-243 (LVALIILAFAAFWLPYHVVNL) traverse the membrane as a helical segment. At 244–269 (AEGFRAAAGKALGSGPVGRRLLLARH) the chain is on the extracellular side. The helical transmembrane segment at 270-290 (VLITLAFLSSSVNPLLYACAG) threads the bilayer. The Cytoplasmic portion of the chain corresponds to 291 to 349 (GGLLRSAGVGFIAKLLEGTGSETSSSRRKGTLAQTLRGTPASPEPDPAESLTASTNPLE). Residues 311–349 (SETSSSRRKGTLAQTLRGTPASPEPDPAESLTASTNPLE) form a disordered region.

It belongs to the G-protein coupled receptor 1 family. In terms of processing, phosphorylated by GRK6 upon leukotriene B4 binding; which promotes desensitization.

Its subcellular location is the cell membrane. Its function is as follows. Receptor for extracellular ATP &gt; UTP and ADP. The activity of this receptor is mediated by G proteins which activate a phosphatidylinositol-calcium second messenger system. May be the cardiac P2Y receptor involved in the regulation of cardiac muscle contraction through modulation of L-type calcium currents. Is a receptor for leukotriene B4, a potent chemoattractant involved in inflammation and immune response. The sequence is that of Leukotriene B4 receptor 1 (LTB4R) from Bos taurus (Bovine).